We begin with the raw amino-acid sequence, 477 residues long: C3a anaphylatoxin chemotactic receptor (477 aa).

At 1 to 23 the chain is on the extracellular side; it reads MESFDADTNSTDLHSRPLFQPQD. Asparagine 9 is a glycosylation site (N-linked (GlcNAc...) asparagine). A helical transmembrane segment spans residues 24 to 46; that stretch reads IASMVILGLTCLLGLLGNGLVLW. Residues 47–57 are Cytoplasmic-facing; sequence VAGVKMKTTVN. Residues 58–80 form a helical membrane-spanning segment; that stretch reads TVWFLHLTLADFLCCLSLPFSLA. Residues 81 to 96 are Extracellular-facing; it reads HLILQGHWPYGLFLCK. Residues cysteine 95 and cysteine 172 are joined by a disulfide bond. The chain crosses the membrane as a helical span at residues 97–118; it reads LIPSIIILNMFASVFLLTAISL. Residues 119 to 139 are Cytoplasmic-facing; the sequence is DRCLIVHKPIWCQNHRNVRTA. A helical membrane pass occupies residues 140 to 160; sequence FAICGCVWVVAFVMCVPVFVY. Residues 161–333 are Extracellular-facing; it reads RDLFIMDNRS…TPLMAITITR (173 aa). The N-linked (GlcNAc...) asparagine glycan is linked to asparagine 168. Residues tyrosine 174 and tyrosine 184 each carry the sulfotyrosine modification. Residues asparagine 197 and asparagine 201 are each glycosylated (N-linked (GlcNAc...) asparagine). Position 312 is a sulfotyrosine (tyrosine 312). Residues 334–353 traverse the membrane as a helical segment; sequence LVVGFLVPFFIMVICYSLIV. At 354–370 the chain is on the cytoplasmic side; the sequence is FRMRKTNFTKSRNKTFR. A helical membrane pass occupies residues 371-393; that stretch reads VAVAVVTVFFICWTPYHLVGVLL. Topologically, residues 394 to 410 are extracellular; sequence LITDPESSLGEAVMSWD. The chain crosses the membrane as a helical span at residues 411-431; sequence HMSIALASANSCFNPFLYALL. At 432-477 the chain is on the cytoplasmic side; it reads GKDFRKKARQSIKGILEAAFSEELTHSTNCTQDKASSKRNNMSTDV. Position 452 is a phosphoserine (serine 452). Threonine 456 is modified (phosphothreonine).

The protein belongs to the G-protein coupled receptor 1 family. As to quaternary structure, interacts with VGF-derived peptide TLQP-21. Detected in varying levels in all tissues examined except the spleen. Especially abundant in heart and lung.

It localises to the cell membrane. Its function is as follows. Receptor for the chemotactic and inflammatory peptide anaphylatoxin C3a. This receptor stimulates chemotaxis, granule enzyme release and superoxide anion production. The sequence is that of C3a anaphylatoxin chemotactic receptor (C3ar1) from Mus musculus (Mouse).